Consider the following 185-residue polypeptide: Elongation factor P (185 aa).

It belongs to the elongation factor P family.

It is found in the cytoplasm. Its pathway is protein biosynthesis; polypeptide chain elongation. Involved in peptide bond synthesis. Stimulates efficient translation and peptide-bond synthesis on native or reconstituted 70S ribosomes in vitro. Probably functions indirectly by altering the affinity of the ribosome for aminoacyl-tRNA, thus increasing their reactivity as acceptors for peptidyl transferase. The sequence is that of Elongation factor P from Azoarcus sp. (strain BH72).